A 384-amino-acid polypeptide reads, in one-letter code: Lipid-A-disaccharide synthase 1 (384 aa).

Belongs to the LpxB family.

It catalyses the reaction a lipid X + a UDP-2-N,3-O-bis[(3R)-3-hydroxyacyl]-alpha-D-glucosamine = a lipid A disaccharide + UDP + H(+). Its pathway is bacterial outer membrane biogenesis; LPS lipid A biosynthesis. Its function is as follows. Condensation of UDP-2,3-diacylglucosamine and 2,3-diacylglucosamine-1-phosphate to form lipid A disaccharide, a precursor of lipid A, a phosphorylated glycolipid that anchors the lipopolysaccharide to the outer membrane of the cell. This Legionella pneumophila (strain Paris) protein is Lipid-A-disaccharide synthase 1.